The primary structure comprises 116 residues: MEEYHRHCDEVGFNAEEAHNIVKECVDGVLGGEDYNHNNINQWTASIVEQSLTHLVKLGKAYKYIVTCAVVQKSAYGFHTASSCFWDTTSDGTCTVRWENRTMNCIVNVFAIAIVL.

The residue at position 4 (tyrosine 4) is a 3'-nitrotyrosine.

Belongs to the dynein light chain Tctex-type family. Homodimer. The cytoplasmic dynein 1 complex consists of two catalytic heavy chains (HCs) and a number of non-catalytic subunits presented by intermediate chains (ICs), light intermediate chains (LICs) and light chains (LCs); the composition seems to vary in respect to the IC, LIC and LC composition. The heavy chain homodimer serves as a scaffold for the probable homodimeric assembly of the respective non-catalytic subunits. The ICs and LICs bind directly to the HC dimer and the LCs assemble on the IC dimer. DYNLT1 and DYNLT3 compete for association with dynein IC (DYNC1I1 or DYNC1I2). Self-associates. Interacts with DYNC1I1 and DYNC1I2. Interacts with BUB3. Interacts with SATB1 in nucleus to form complex with matrix attachment regions (MARs) of DNA.

The protein localises to the nucleus. Its subcellular location is the cytoplasm. It localises to the cytoskeleton. The protein resides in the chromosome. It is found in the centromere. The protein localises to the kinetochore. Acts as one of several non-catalytic accessory components of the cytoplasmic dynein 1 complex that are thought to be involved in linking dynein to cargos and to adapter proteins that regulate dynein function. Cytoplasmic dynein 1 acts as a motor for the intracellular retrograde motility of vesicles and organelles along microtubules. Probably binds BUB3 as part of transport cargo. Required for the efficient progression through mitosis. The polypeptide is Dynein light chain Tctex-type 3 (DYNLT3) (Homo sapiens (Human)).